The following is a 671-amino-acid chain: UvrABC system protein B (671 aa).

A Helicase ATP-binding domain is found at 25–178; sequence EGIKKGYKHQ…DAMLKKLVEI (154 aa). Position 38–45 (38–45) interacts with ATP; sequence GVTGSGKT. The Beta-hairpin motif lies at 91–114; it reads YYDYYQPEAYIPETDTYIEKDALI. Residues 435 to 601 enclose the Helicase C-terminal domain; the sequence is QVEDLLEEIH…TVKSKIKDIL (167 aa). Positions 626 to 661 constitute a UVR domain; it reads EETIKKLEQEMKHAAENLEFEKAAEIRDKIFKIKEK.

It belongs to the UvrB family. Forms a heterotetramer with UvrA during the search for lesions. Interacts with UvrC in an incision complex.

It localises to the cytoplasm. Functionally, the UvrABC repair system catalyzes the recognition and processing of DNA lesions. A damage recognition complex composed of 2 UvrA and 2 UvrB subunits scans DNA for abnormalities. Upon binding of the UvrA(2)B(2) complex to a putative damaged site, the DNA wraps around one UvrB monomer. DNA wrap is dependent on ATP binding by UvrB and probably causes local melting of the DNA helix, facilitating insertion of UvrB beta-hairpin between the DNA strands. Then UvrB probes one DNA strand for the presence of a lesion. If a lesion is found the UvrA subunits dissociate and the UvrB-DNA preincision complex is formed. This complex is subsequently bound by UvrC and the second UvrB is released. If no lesion is found, the DNA wraps around the other UvrB subunit that will check the other stand for damage. This chain is UvrABC system protein B, found in Thermodesulfovibrio yellowstonii (strain ATCC 51303 / DSM 11347 / YP87).